A 497-amino-acid chain; its full sequence is Probable pectinesterase 30 (497 aa).

The N-terminal stretch at 1-21 (MLVKVFSFFILMIIMVIGVSK) is a signal peptide. N-linked (GlcNAc...) asparagine glycans are attached at residues asparagine 238 and asparagine 254. Threonine 263 contributes to the substrate binding site. The Proton donor role is filled by aspartate 316. An intrachain disulfide couples cysteine 330 to cysteine 350. Aspartate 337 (nucleophile) is an active-site residue. An N-linked (GlcNAc...) asparagine glycan is attached at asparagine 385. Arginine 403 and tryptophan 405 together coordinate substrate.

This sequence belongs to the pectinesterase family. Expressed in siliques.

The protein localises to the secreted. It is found in the cell wall. The enzyme catalyses [(1-&gt;4)-alpha-D-galacturonosyl methyl ester](n) + n H2O = [(1-&gt;4)-alpha-D-galacturonosyl](n) + n methanol + n H(+). The protein operates within glycan metabolism; pectin degradation; 2-dehydro-3-deoxy-D-gluconate from pectin: step 1/5. Acts in the modification of cell walls via demethylesterification of cell wall pectin. The polypeptide is Probable pectinesterase 30 (PME30) (Arabidopsis thaliana (Mouse-ear cress)).